A 176-amino-acid chain; its full sequence is Translation initiation factor IF-3 (176 aa).

The protein belongs to the IF-3 family. As to quaternary structure, monomer.

It localises to the cytoplasm. Its function is as follows. IF-3 binds to the 30S ribosomal subunit and shifts the equilibrium between 70S ribosomes and their 50S and 30S subunits in favor of the free subunits, thus enhancing the availability of 30S subunits on which protein synthesis initiation begins. The polypeptide is Translation initiation factor IF-3 (Microcystis aeruginosa (strain NIES-843 / IAM M-2473)).